The sequence spans 809 residues: ATP-dependent zinc metalloprotease FTSH 3, mitochondrial (809 aa).

A mitochondrion-targeting transit peptide spans 1-83; it reads MTMIFFSKLN…FANPRLRRFF (83 aa). The segment covering 93 to 121 has biased composition (basic and acidic residues); that stretch reads YENYFPKDKQEPKSDQKSEHKEGSEKNEN. Residues 93 to 122 are disordered; that stretch reads YENYFPKDKQEPKSDQKSEHKEGSEKNENE. A helical transmembrane segment spans residues 132 to 152; it reads FQNLLIPLLALAVFFSTFSFG. Position 362–369 (362–369) interacts with ATP; sequence GPPGTGKT. Residue H586 participates in Zn(2+) binding. The active site involves E587. Zn(2+) is bound by residues H590 and D662. The disordered stretch occupies residues 776–809; that stretch reads GFEETEKDSAATPTVEPVVDDGAPPPFEPQVVPT.

In the N-terminal section; belongs to the AAA ATPase family. It in the C-terminal section; belongs to the peptidase M41 family. The cofactor is Zn(2+).

Its subcellular location is the mitochondrion inner membrane. In terms of biological role, probable ATP-dependent zinc metallopeptidase. Involved in the assembly and/or stability of the complexes I and V of the mitochondrial oxidative phosphorylation system. In Arabidopsis thaliana (Mouse-ear cress), this protein is ATP-dependent zinc metalloprotease FTSH 3, mitochondrial (FTSH3).